Consider the following 348-residue polypeptide: Rhodopsin (348 aa).

Residues 1–33 lie on the Extracellular side of the membrane; sequence TEGPYFYIPMVNTTGIVRSPYEYPQYYLVNPAA. A glycan (N-linked (GlcNAc...) asparagine) is linked at Asn12. The chain crosses the membrane as a helical span at residues 34–58; it reads YAMLGAYMFFLIIVGFPVNFMTLYV. Residues 59–70 lie on the Cytoplasmic side of the membrane; sequence TLEHKKLRTPLN. Residues 71–93 form a helical membrane-spanning segment; the sequence is YILLNLAVADLFMVIGGFTTTIY. Residues 94 to 107 are Extracellular-facing; that stretch reads TSMHGYFVLGRLGC. A disulfide bridge connects residues Cys107 and Cys184. A helical transmembrane segment spans residues 108–130; it reads NIEGFFATLGGMISLWSLAVLAI. The 'Ionic lock' involved in activated form stabilization signature appears at 131-133; it reads ERW. Residues 131 to 149 lie on the Cytoplasmic side of the membrane; sequence ERWVVVCKPISNFRFGENH. A helical transmembrane segment spans residues 150–170; that stretch reads AIMGVSLTWAMALACTVPPLV. The Extracellular portion of the chain corresponds to 171-199; that stretch reads GWSRYIPEGMQCSCGIDYYTRAEGFNNES. N-linked (GlcNAc...) asparagine glycosylation is present at Asn197. The chain crosses the membrane as a helical span at residues 200–221; the sequence is FVLYMFFCHFTIPLTIIFFCYG. At 222-249 the chain is on the cytoplasmic side; the sequence is RLLCAVKEAAAAQQESETTQRAEREVTR. A helical transmembrane segment spans residues 250-271; that stretch reads MVIIMVIGFLICWLPYASVAWF. Topologically, residues 272-283 are extracellular; it reads IFTHQGSEFGPL. The chain crosses the membrane as a helical span at residues 284–305; sequence FMTIPAFFAKSSSIYNPMIYIC. An N6-(retinylidene)lysine modification is found at Lys293. The Cytoplasmic segment spans residues 306-348; the sequence is MNKQFRHCMITTLFCGKNPFEGEEEGASSTKTEASSASSVSPA. A lipid anchor (S-palmitoyl cysteine) is attached at Cys320. Residues 327–348 are disordered; the sequence is GEEEGASSTKTEASSASSVSPA. Positions 332–348 are enriched in low complexity; the sequence is ASSTKTEASSASSVSPA.

Belongs to the G-protein coupled receptor 1 family. Opsin subfamily. In terms of processing, phosphorylated on some or all of the serine and threonine residues present in the C-terminal region. Post-translationally, contains one covalently linked retinal chromophore.

Its subcellular location is the membrane. It localises to the cell projection. It is found in the cilium. The protein resides in the photoreceptor outer segment. Functionally, photoreceptor required for image-forming vision at low light intensity. While most salt water fish species use retinal as chromophore, most freshwater fish use 3-dehydroretinal, or a mixture of retinal and 3-dehydroretinal. Light-induced isomerization of 11-cis to all-trans retinal triggers a conformational change that activates signaling via G-proteins. Subsequent receptor phosphorylation mediates displacement of the bound G-protein alpha subunit by arrestin and terminates signaling. This is Rhodopsin (rho) from Sargocentron microstoma (Smallmouth squirrelfish).